A 427-amino-acid chain; its full sequence is Endothelin-1 receptor (427 aa).

Positions 1-20 (MSIFCLAAYFWLTMVGGVMA) are cleaved as a signal peptide. The Extracellular segment spans residues 21–80 (DNPERYSANLSSHMEDFTPFPGTEINFLGTTHRPPNLALPSNGSMHGYCPQQTKITTAFK). Asn-29 and Asn-62 each carry an N-linked (GlcNAc...) asparagine glycan. The helical transmembrane segment at 81 to 102 (YINTVISCTIFIVGMVGNATLL) threads the bilayer. Residues 103–112 (RIIYQNKCMR) lie on the Cytoplasmic side of the membrane. The chain crosses the membrane as a helical span at residues 113 to 132 (NGPNALIASLALGDLIYVVI). The Extracellular segment spans residues 133 to 159 (DLPINVFKLLAGRWPFDHNDFGVFLCK). Cysteines 158 and 239 form a disulfide. A helical transmembrane segment spans residues 160–181 (LFPFLQKSSVGITVLNLCALSV). At 182-205 (DRYRAVASWSRVQGIGIPLITAIE) the chain is on the cytoplasmic side. A helical membrane pass occupies residues 206–229 (IVSIWILSFILAIPEAIGFVMVPF). Over 230 to 256 (EYKGELHRTCMLNATSKFMEFYQDVKD) the chain is Extracellular. N-linked (GlcNAc...) asparagine glycosylation occurs at Asn-242. The chain crosses the membrane as a helical span at residues 257-278 (WWLFGFYFCMPLVCTAIFYTLM). The Cytoplasmic segment spans residues 279–306 (TCEMLNRRNGSLRIALSEHLKQRREVAK). A helical transmembrane segment spans residues 307 to 328 (TVFCLVVIFALCWFPLHLSRIL). Residues 329–347 (KKTVYDEMDKNRCELLSFL) are Extracellular-facing. The helical transmembrane segment at 348 to 372 (LLMDYIGINLATMNSCINPIALYFV) threads the bilayer. The Cytoplasmic segment spans residues 373–427 (SKKFKNCFQSCLCCCCHQSKSLMTSVPMNGTSIQWKNQEQNNHNTERSSHKDSMN). The disordered stretch occupies residues 408 to 427 (KNQEQNNHNTERSSHKDSMN). Residues 416 to 427 (NTERSSHKDSMN) are compositionally biased toward basic and acidic residues. At Ser-425 the chain carries Phosphoserine.

It belongs to the G-protein coupled receptor 1 family. Endothelin receptor subfamily. EDNRA sub-subfamily. Interacts with HDAC7 and KAT5.

The protein resides in the cell membrane. Receptor for endothelin-1. Mediates its action by association with G proteins that activate a phosphatidylinositol-calcium second messenger system. The rank order of binding affinities for ET-A is: ET1 &gt; ET2 &gt;&gt; ET3. The polypeptide is Endothelin-1 receptor (Mus musculus (Mouse)).